The primary structure comprises 691 residues: tRNA-dihydrouridine(47) synthase [NAD(P)(+)]-like (691 aa).

S2 carries the post-translational modification N-acetylserine. The tract at residues 55–94 (PPPPSRSVKQNDAADVRAPQSGLVQEKKSKRQLKRERREQ) is disordered. 2 C3H1-type zinc fingers span residues 94–125 (QSTINLCPQVARTEDVDSCQYKDKCRFNHDIE) and 138–163 (QCPFVASGMKCAYGLSCRFLGSHRDI). A disordered region spans residues 259-286 (LETEEVRPMKKAKSEDQKNSKTGDVGGV). A compositionally biased stretch (basic and acidic residues) spans 262–279 (EEVRPMKKAKSEDQKNSK). FMN contacts are provided by residues 344-346 (PLT) and Q398. The active-site Proton donor is C429. FMN contacts are provided by residues K468, H498, 531 to 533 (NGD), and 556 to 557 (AR).

It belongs to the Dus family. Dus3 subfamily. FMN serves as cofactor.

It catalyses the reaction 5,6-dihydrouridine(47) in tRNA + NAD(+) = uridine(47) in tRNA + NADH + H(+). It carries out the reaction 5,6-dihydrouridine(47) in tRNA + NADP(+) = uridine(47) in tRNA + NADPH + H(+). The enzyme catalyses a 5,6-dihydrouridine in mRNA + NAD(+) = a uridine in mRNA + NADH + H(+). The catalysed reaction is a 5,6-dihydrouridine in mRNA + NADP(+) = a uridine in mRNA + NADPH + H(+). Functionally, catalyzes the synthesis of dihydrouridine, a modified base found in the D-loop of most tRNAs. Specifically modifies U47 in cytoplasmic tRNAs. Catalyzes the synthesis of dihydrouridine in some mRNAs, thereby affecting their translation. In Arabidopsis thaliana (Mouse-ear cress), this protein is tRNA-dihydrouridine(47) synthase [NAD(P)(+)]-like.